Reading from the N-terminus, the 66-residue chain is Large ribosomal subunit protein bL35 (66 aa).

It belongs to the bacterial ribosomal protein bL35 family.

The chain is Large ribosomal subunit protein bL35 from Bradyrhizobium diazoefficiens (strain JCM 10833 / BCRC 13528 / IAM 13628 / NBRC 14792 / USDA 110).